A 205-amino-acid chain; its full sequence is Beta-crystallin B2 (205 aa).

A2 bears the N-acetylalanine mark. Residues 2–16 are N-terminal arm; the sequence is ASDHQTQAGKPQSLN. 2 Beta/gamma crystallin 'Greek key' domains span residues 17-56 and 57-101; these read PKII…LVQA and GPWV…RPIK. The interval 102-106 is connecting peptide; it reads VDSQE. 2 consecutive Beta/gamma crystallin 'Greek key' domains span residues 107-148 and 149-191; these read HKII…RVQS and GTWV…RRIR. The tract at residues 193 to 205 is C-terminal arm; sequence MQWHQRGAFHPSN.

The protein belongs to the beta/gamma-crystallin family. In terms of assembly, homo/heterodimer, or complexes of higher-order. The structure of beta-crystallin oligomers seems to be stabilized through interactions between the N-terminal arms.

Functionally, crystallins are the dominant structural components of the vertebrate eye lens. This is Beta-crystallin B2 (CRYBB2) from Homo sapiens (Human).